A 440-amino-acid chain; its full sequence is Ankyrin repeat and MYND domain-containing protein 2 (440 aa).

3 ANK repeats span residues 45–74, 79–108, and 159–188; these read NGMT…DASC, HGYT…ETDV, and KLAG…NPLL. Positions 320, 323, 332, 335, 341, 345, 353, and 357 each coordinate Zn(2+). The segment at 320–357 adopts an MYND-type zinc-finger fold; that stretch reads CTTCGEKGASKRCSVCKMVIYCDQTCQKTHWFAHKKMC. Residues 371-381 are compositionally biased toward basic and acidic residues; it reads AAKHKRQEEKN. The segment at 371–440 is disordered; that stretch reads AAKHKRQEEK…APTGPQLSEE (70 aa).

As to quaternary structure, interacts with the retinal-specific guanylyl cyclase GC1.

The protein resides in the cell projection. It localises to the cilium. Its function is as follows. May be involved in the trafficking of signaling proteins to the cilia. The polypeptide is Ankyrin repeat and MYND domain-containing protein 2 (Ankmy2) (Mus musculus (Mouse)).